Reading from the N-terminus, the 304-residue chain is WW domain-binding protein 1 (304 aa).

A disordered region spans residues 1–26 (MARASSRNSSEEAWGSLQAPQQQQSP). 2 consecutive short sequence motifs (PPxY motif) follow at residues 159 to 162 (PPAY) and 172 to 176 (PPPPY). Disordered regions lie at residues 206–235 (TNVEGVSSQQSALPHQEGEPRAGLSPVHIP) and 252–304 (CPCP…GDIP). Residues 209 to 218 (EGVSSQQSAL) show a composition bias toward polar residues.

In terms of assembly, binds to the WW domain of YAP1, WWP1 and WWP2. Interacts with WWOX. Interacts with NEDD4.

The chain is WW domain-binding protein 1 (Wbp1) from Mus musculus (Mouse).